A 227-amino-acid chain; its full sequence is uncharacterized protein (227 aa).

The next 7 helical transmembrane spans lie at 15 to 34 (FIAAEALYSSIIFLICFLIY), 55 to 77 (TFLFLGLAYFLRFVVLLLSASGV), 92 to 114 (AFSMAFLAYSGSAAILYTIYSLL), 121 to 140 (FPGEVVINGVALVIALTSLL), 145 to 167 (LVFLISQLALVFLLVAAIFVNYS), 180 to 202 (PLYILLFVFWLLNISLTFRFLPL), and 206 to 224 (FAIYTLSVAVILIIAYRVL).

The protein resides in the cell membrane. This is an uncharacterized protein from Archaeoglobus fulgidus (strain ATCC 49558 / DSM 4304 / JCM 9628 / NBRC 100126 / VC-16).